The primary structure comprises 194 residues: Leucyl/phenylalanyl-tRNA--protein transferase (194 aa).

It belongs to the L/F-transferase family.

The protein localises to the cytoplasm. The enzyme catalyses N-terminal L-lysyl-[protein] + L-leucyl-tRNA(Leu) = N-terminal L-leucyl-L-lysyl-[protein] + tRNA(Leu) + H(+). It catalyses the reaction N-terminal L-arginyl-[protein] + L-leucyl-tRNA(Leu) = N-terminal L-leucyl-L-arginyl-[protein] + tRNA(Leu) + H(+). The catalysed reaction is L-phenylalanyl-tRNA(Phe) + an N-terminal L-alpha-aminoacyl-[protein] = an N-terminal L-phenylalanyl-L-alpha-aminoacyl-[protein] + tRNA(Phe). Functionally, functions in the N-end rule pathway of protein degradation where it conjugates Leu, Phe and, less efficiently, Met from aminoacyl-tRNAs to the N-termini of proteins containing an N-terminal arginine or lysine. The polypeptide is Leucyl/phenylalanyl-tRNA--protein transferase (Prosthecochloris aestuarii (strain DSM 271 / SK 413)).